A 481-amino-acid polypeptide reads, in one-letter code: ADAMTS-like protein 5 (481 aa).

Positions 1–42 (MGKLRPGRVEWLASGHTERPHLFQNLLLFLWALLNCGLGVSA) are cleaved as a signal peptide. The TSP type-1 domain maps to 45 to 97 (PGEWTPWVSWTRCSSSCGRGVSVRSRRCLRLPGEEPCWGDSHEYRLCQLPDCP). 3 disulfide bridges follow: cysteine 57/cysteine 91, cysteine 61/cysteine 96, and cysteine 72/cysteine 81. An N-linked (GlcNAc...) asparagine glycan is attached at asparagine 218. The interval 331-361 (QPQPRGVEPQPPAAPAVTPAQTPTLAPDPCP) is disordered. The span at 345-355 (PAVTPAQTPTL) shows a compositional bias: low complexity. Intrachain disulfides connect cysteine 360–cysteine 425, cysteine 363–cysteine 427, and cysteine 377–cysteine 479. An NTR domain is found at 360 to 479 (CPPCPDTRGR…SRIRLTARRC (120 aa)).

In terms of assembly, interacts with heparin, FBN1 and FBN2. Proteolytically cleaved to release a C-terminal fragment containing the NTR domain. Post-translationally, contains at least one additional N-linked glycosylation site.

The protein resides in the secreted. It localises to the extracellular space. The protein localises to the extracellular matrix. May play a role in modulation of fibrillin microfibrils in the extracellular matrix (ECM). This Homo sapiens (Human) protein is ADAMTS-like protein 5 (ADAMTSL5).